The following is a 1752-amino-acid chain: Serine protease/ABC transporter B family protein tagA (1752 aa).

An N-terminal signal peptide occupies residues 1–24 (MNKKLFIFGLSLFLFLFIFNLSLS). A glycan (N-linked (GlcNAc...) asparagine) is linked at asparagine 20. Residues 280-696 (HYSIQSGSAS…FGNIQLSKLI (417 aa)) enclose the Peptidase S8 domain. Active-site charge relay system residues include aspartate 312 and histidine 352. N-linked (GlcNAc...) asparagine glycosylation is found at asparagine 400 and asparagine 557. Serine 625 serves as the catalytic Charge relay system. Asparagine 653, asparagine 785, and asparagine 823 each carry an N-linked (GlcNAc...) asparagine glycan. The chain crosses the membrane as a helical span at residues 909–929 (IVLLGIFGIIIVGAVIFVLVC). Residues 946-1032 (DKGGDGNSIR…QNNSPQYDED (87 aa)) are disordered. Residues 962 to 994 (NNNNNNNNNNNNNNNNNNNNNNNNNNNNNNNNN) show a composition bias toward low complexity. Asparagine 993 carries N-linked (GlcNAc...) asparagine glycosylation. A compositionally biased stretch (polar residues) spans 995–1004 (SNGKQSNIEL). Residues 1013–1028 (GTPNGDDQQQQNNSPQ) are compositionally biased toward low complexity. Transmembrane regions (helical) follow at residues 1058–1078 (ILGLALFLSFIDVALGLAVPL), 1102–1122 (FALIIIGMIIVQFLSGILLAL), 1174–1194 (IPHMIIQIATIGGTLIMLFII), 1200–1220 (LVVLCPLPILLVFSKFYGGYI), 1285–1305 (TSGIFEQLSVFILLWYGSSLV), and 1315–1335 (LIAFNLFLPFITGAVTQVASL). One can recognise an ABC transmembrane type-1 domain in the interval 1059-1341 (LGLALFLSFI…VASLYTTYKS (283 aa)). An ABC transporter domain is found at 1374–1610 (IQFNKVSFAY…KGMFYDFVQI (237 aa)). 1409–1416 (GPSGGGKS) is an ATP binding site. The interval 1621-1686 (IQLPSNSRNT…SRSPPPMWRQ (66 aa)) is disordered. Basic and acidic residues predominate over residues 1631-1642 (RNADKLRNRSET). N-linked (GlcNAc...) asparagine glycans are attached at residues asparagine 1638, asparagine 1670, and asparagine 1694.

This sequence in the C-terminal section; belongs to the ABC transporter superfamily. ABCB family. Multidrug resistance exporter (TC 3.A.1.201) subfamily. The protein in the N-terminal section; belongs to the peptidase S8 family.

The protein resides in the membrane. Its function is as follows. Required for a general cell fate determination at the onset of development. Required for the specification of an initial population of prespore cells in which tagA is expressed. Required for normal SDF-2 signaling during spore encapsulation. The polypeptide is Serine protease/ABC transporter B family protein tagA (tagA) (Dictyostelium discoideum (Social amoeba)).